We begin with the raw amino-acid sequence, 314 residues long: 4-hydroxy-3-methylbut-2-enyl diphosphate reductase (314 aa).

A [4Fe-4S] cluster-binding site is contributed by Cys12. (2E)-4-hydroxy-3-methylbut-2-enyl diphosphate contacts are provided by His41 and His74. Residues His41 and His74 each contribute to the dimethylallyl diphosphate site. Isopentenyl diphosphate contacts are provided by His41 and His74. Residue Cys96 participates in [4Fe-4S] cluster binding. His124 provides a ligand contact to (2E)-4-hydroxy-3-methylbut-2-enyl diphosphate. Dimethylallyl diphosphate is bound at residue His124. His124 is a binding site for isopentenyl diphosphate. Glu126 (proton donor) is an active-site residue. Residue Thr167 coordinates (2E)-4-hydroxy-3-methylbut-2-enyl diphosphate. Cys197 lines the [4Fe-4S] cluster pocket. Positions 225, 226, 227, and 269 each coordinate (2E)-4-hydroxy-3-methylbut-2-enyl diphosphate. 4 residues coordinate dimethylallyl diphosphate: Ser225, Ser226, Asn227, and Ser269. Positions 225, 226, 227, and 269 each coordinate isopentenyl diphosphate.

The protein belongs to the IspH family. Requires [4Fe-4S] cluster as cofactor.

The catalysed reaction is isopentenyl diphosphate + 2 oxidized [2Fe-2S]-[ferredoxin] + H2O = (2E)-4-hydroxy-3-methylbut-2-enyl diphosphate + 2 reduced [2Fe-2S]-[ferredoxin] + 2 H(+). It catalyses the reaction dimethylallyl diphosphate + 2 oxidized [2Fe-2S]-[ferredoxin] + H2O = (2E)-4-hydroxy-3-methylbut-2-enyl diphosphate + 2 reduced [2Fe-2S]-[ferredoxin] + 2 H(+). It functions in the pathway isoprenoid biosynthesis; dimethylallyl diphosphate biosynthesis; dimethylallyl diphosphate from (2E)-4-hydroxy-3-methylbutenyl diphosphate: step 1/1. It participates in isoprenoid biosynthesis; isopentenyl diphosphate biosynthesis via DXP pathway; isopentenyl diphosphate from 1-deoxy-D-xylulose 5-phosphate: step 6/6. In terms of biological role, catalyzes the conversion of 1-hydroxy-2-methyl-2-(E)-butenyl 4-diphosphate (HMBPP) into a mixture of isopentenyl diphosphate (IPP) and dimethylallyl diphosphate (DMAPP). Acts in the terminal step of the DOXP/MEP pathway for isoprenoid precursor biosynthesis. This is 4-hydroxy-3-methylbut-2-enyl diphosphate reductase from Psychromonas ingrahamii (strain DSM 17664 / CCUG 51855 / 37).